A 302-amino-acid polypeptide reads, in one-letter code: Probable proteasome inhibitor (302 aa).

At A2 the chain carries N-acetylalanine. Disordered stretches follow at residues 151-188 (LDGK…QIHP) and 259-302 (ARFD…SDFI). The span at 259–269 (ARFDPYGPPGV) shows a compositional bias: pro residues.

This sequence belongs to the proteasome inhibitor PI31 family.

In terms of biological role, could play an important role in control of proteasome function. Inhibits the hydrolysis of protein and peptide substrates by the 20S proteasome. The protein is Probable proteasome inhibitor of Arabidopsis thaliana (Mouse-ear cress).